The primary structure comprises 413 residues: Terephthalate 1,2-dioxygenase, terminal oxygenase component subunit alpha 2 (413 aa).

One can recognise a Rieske domain in the interval 41–144; the sequence is NYLCLESEIP…CKEEHGPRKL (104 aa). Residues cysteine 82, histidine 84, cysteine 102, and histidine 105 each contribute to the [2Fe-2S] cluster site.

It belongs to the bacterial ring-hydroxylating dioxygenase alpha subunit family. In terms of assembly, heterotetramer composed of 2 alpha (TphA2I and TphA2II) and 2 beta (TphA3I and TphA3II) subunits. Part of a multicomponent enzyme system composed of a reductase (TphA1I or TphA1II) and a two-subunit oxygenase component (TphA2I or TphA2II and TphA3I or TphA3II). Fe cation is required as a cofactor. Requires [2Fe-2S] cluster as cofactor.

It catalyses the reaction terephthalate + NADH + O2 + H(+) = (3S,4R)-3,4-dihydroxycyclohexa-1,5-diene-1,4-dicarboxylate + NAD(+). Inhibited by EDTA. Functionally, component of the terephthalate 1,2-dioxygenase multicomponent enzyme system which catalyzes the dioxygenation of terephthalate (TER/TPA) to 1,2-dihydroxy-3,5-cyclohexadiene-1,4-dicarboxylic acid (DCD). It can also use 2,5-dicarboxypyridine (PDC) and 1,4-napthalenedicarboxylic acid (NDC) as substrates, and preferentially uses NADPH which is the physiological electron donor. The chain is Terephthalate 1,2-dioxygenase, terminal oxygenase component subunit alpha 2 (tphA2II) from Comamonas sp.